A 308-amino-acid polypeptide reads, in one-letter code: Thymidylate synthase (308 aa).

DUMP contacts are provided by residues Arg-26 and 170-171; that span reads RR. The active-site Nucleophile is Cys-190. DUMP is bound by residues 210–213, Asn-221, and 251–253; these read RSCD and HVY. A (6R)-5,10-methylene-5,6,7,8-tetrahydrofolate-binding site is contributed by Asp-213. Residue Ala-307 participates in (6R)-5,10-methylene-5,6,7,8-tetrahydrofolate binding.

This sequence belongs to the thymidylate synthase family. Bacterial-type ThyA subfamily. As to quaternary structure, homodimer.

It localises to the cytoplasm. The enzyme catalyses dUMP + (6R)-5,10-methylene-5,6,7,8-tetrahydrofolate = 7,8-dihydrofolate + dTMP. Its pathway is pyrimidine metabolism; dTTP biosynthesis. Catalyzes the reductive methylation of 2'-deoxyuridine-5'-monophosphate (dUMP) to 2'-deoxythymidine-5'-monophosphate (dTMP) while utilizing 5,10-methylenetetrahydrofolate (mTHF) as the methyl donor and reductant in the reaction, yielding dihydrofolate (DHF) as a by-product. This enzymatic reaction provides an intracellular de novo source of dTMP, an essential precursor for DNA biosynthesis. This is Thymidylate synthase from Rhizorhabdus wittichii (strain DSM 6014 / CCUG 31198 / JCM 15750 / NBRC 105917 / EY 4224 / RW1) (Sphingomonas wittichii).